The primary structure comprises 556 residues: Guard cell S-type anion channel SLAC1 (556 aa).

The interval 1–103 (MERKQSNAHS…GIINGGDGRK (103 aa)) is disordered. At 1 to 189 (MERKQSNAHS…EQWPFLLRFP (189 aa)) the chain is on the cytoplasmic side. A coiled-coil region spans residues 10–36 (STFADINEVEDEAEQELQQQENNNNKR). Positions 25–34 (ELQQQENNNN) are enriched in low complexity. Phosphoserine; by SRK2E is present on serine 59. Positions 69-79 (RESRERDDKKS) are enriched in basic and acidic residues. Phosphoserine; by SRK2E is present on residues serine 86, serine 113, and serine 120. The segment covering 86 to 99 (SFGGFESGGIINGG) has biased composition (gly residues). A Phosphoserine modification is found at serine 146. A helical membrane pass occupies residues 190–210 (IGCFGICLGLSSQAVLWLALA). The Extracellular portion of the chain corresponds to 211–216 (KSPATN). Residues 217–237 (FLHITPLINLVVWLFSLVVLV) form a helical membrane-spanning segment. The Cytoplasmic segment spans residues 238-265 (SVSFTYILKCIFYFEAVKREYFHPVRVN). A helical transmembrane segment spans residues 266–286 (FFFAPWVVCMFLAISVPPMFS). At 287–295 (PNRKYLHPA) the chain is on the extracellular side. Residues 296–316 (IWCVFMGPYFFLELKIYGQWL) traverse the membrane as a helical segment. Topologically, residues 317–325 (SGGKRRLCK) are cytoplasmic. Residues 326–346 (VANPSSHLSVVGNFVGAILAS) traverse the membrane as a helical segment. Residues 347–352 (KVGWDE) are Extracellular-facing. Residues 353–373 (VAKFLWAVGFAHYLVVFVTLY) form a helical membrane-spanning segment. Residues 374 to 388 (QRLPTSEALPKELHP) are Cytoplasmic-facing. Residues 389 to 409 (VYSMFIAAPSAASIAWNTIYG) form a helical membrane-spanning segment. Topologically, residues 410-418 (QFDGCSRTC) are extracellular. A helical transmembrane segment spans residues 419 to 439 (FFIALFLYISLVARINFFTGF). A topological domain (cytoplasmic) is located at residue lysine 440. The chain crosses the membrane as a helical span at residues 441 to 463 (FSVAWWSYTFPMTTASVATIKYA). At 464-479 (EAVPGYPSRALALTLS) the chain is on the extracellular side. The helical transmembrane segment at 480–500 (FISTAMVCVLFVSTLLHAFVW) threads the bilayer. Over 501-556 (QTLFPNDLAIAITKRKLTREKKPFKRAYDLKRWTKQALAKKISAEKDFEAEEESHH) the chain is Cytoplasmic.

The protein belongs to the SLAC1 S-type anion channel family. Homotrimer. Interacts with SRK2E, CPK6, CPK21, CPK23 and PP2CA. The channel is inactivated upon PP2CA and ABI1 binding. Interacts with KAT1, KAT2, KAT3/KC1 and AKT2. Interacts with GHR1. Phosphorylation by SRK2E, especially on Ser-120, activates the channel. Also phosphorylated and activated by CPK21 and CPK23. Abscisic acid (ABA) promotes phosphorylation. This phosphorylation is inhibited by ABI1. Phosphorylated and activated by GHR1; this phosphorylation is repressed by ABI2 but not ABI1. Phosphorylated by HT1 on N-terminus but not C-terminus. As to expression, preferentially expressed in guard cells. Also detected in the vascular strands close to the leaf margins.

It localises to the cell membrane. With respect to regulation, activated by GHR1-mediated phosphorylation which is negatively regulated by ABI2 but not ABI1. Activation by SRK2E/OST1 and GHR1 is repressed by HT1. Slow, weak voltage-dependent S-type anion efflux channel involved in maintenance of anion homeostasis. Cl(-) efflux through SLAC1 causes membrane depolarization, which activates outward-rectifying K1 channels, leading to KCl and water efflux to reduce turgor further and cause stomatal closure, that reduces water loss and promotes leaf turgor. Essential for stomatal closure in response to CO(2), abscisic acid (ABA), ozone O(3), light/dark transitions, humidity change, calcium ions, hydrogen peroxide H(2)O(2), reactive oxygen species (ROS), and nitric oxide. Binds to the highly selective inward-rectifying potassium channels KAT1 and AKT2, and inhibits their activities. Functions as an essential negative regulator of inward potassium channels in guard cells. Essential for the efficient stomatal closure and opening in guard cells. Involved in the local and/or systemic stomatal responses (e.g. stomatal closure) to light stress. The sequence is that of Guard cell S-type anion channel SLAC1 from Arabidopsis thaliana (Mouse-ear cress).